The sequence spans 153 residues: UPF0225 protein ETA_15740 (153 aa).

This sequence belongs to the UPF0225 family.

The chain is UPF0225 protein ETA_15740 from Erwinia tasmaniensis (strain DSM 17950 / CFBP 7177 / CIP 109463 / NCPPB 4357 / Et1/99).